The following is a 565-amino-acid chain: Urocanate hydratase (565 aa).

Residues 58-59 (GG), Gln-136, 182-184 (GMG), Glu-202, Arg-207, 245-246 (NA), 266-270 (QTSAH), 276-277 (YL), and Tyr-325 each bind NAD(+). The active site involves Cys-413. Residue Gly-495 participates in NAD(+) binding.

The protein belongs to the urocanase family. The cofactor is NAD(+).

It localises to the cytoplasm. The catalysed reaction is 4-imidazolone-5-propanoate = trans-urocanate + H2O. Its pathway is amino-acid degradation; L-histidine degradation into L-glutamate; N-formimidoyl-L-glutamate from L-histidine: step 2/3. In terms of biological role, catalyzes the conversion of urocanate to 4-imidazolone-5-propionate. In Vibrio vulnificus (strain YJ016), this protein is Urocanate hydratase.